Consider the following 135-residue polypeptide: Small ribosomal subunit protein uS9 (135 aa).

The span at 108–118 (VGDSRRTEPHK) shows a compositional bias: basic and acidic residues. Residues 108 to 135 (VGDSRRTEPHKPNRSTKGPRAKRQKSYR) form a disordered region. Positions 119-135 (PNRSTKGPRAKRQKSYR) are enriched in basic residues.

It belongs to the universal ribosomal protein uS9 family. Part of the 30S ribosomal subunit.

The polypeptide is Small ribosomal subunit protein uS9 (Thermococcus kodakarensis (strain ATCC BAA-918 / JCM 12380 / KOD1) (Pyrococcus kodakaraensis (strain KOD1))).